We begin with the raw amino-acid sequence, 93 residues long: Acyl carrier protein AcpXL (93 aa).

The Carrier domain maps to 2-88; the sequence is SSTFDKVADI…NLCAKIDELV (87 aa). Position 37 is an O-(pantetheine 4'-phosphoryl)serine (serine 37).

In terms of processing, 4'-phosphopantetheine is transferred from CoA to a specific serine of apo-ACP by AcpS. This modification is essential for activity because fatty acids are bound in thioester linkage to the sulfhydryl of the prosthetic group.

Its subcellular location is the cytoplasm. It participates in glycolipid biosynthesis; KDO(2)-lipid A biosynthesis. Carrier of the growing fatty acid chain in fatty acid biosynthesis. Is involved in the transfer of long hydroxylated fatty acids to lipid A. The polypeptide is Acyl carrier protein AcpXL (acpXL) (Brucella melitensis biotype 1 (strain ATCC 23456 / CCUG 17765 / NCTC 10094 / 16M)).